Consider the following 214-residue polypeptide: Probable GTP-binding protein EngB (214 aa).

The region spanning 40–212 is the EngB-type G domain; that stretch reads SLPEIVFVGK…KASFAQCIKH (173 aa). Residues 48–55, 75–79, 93–96, 160–163, and 191–193 contribute to the GTP site; these read GKSNVGKS, GRTRQ, DLPG, TKSD, and VSS. Mg(2+) is bound by residues serine 55 and threonine 77.

This sequence belongs to the TRAFAC class TrmE-Era-EngA-EngB-Septin-like GTPase superfamily. EngB GTPase family. Mg(2+) is required as a cofactor.

In terms of biological role, necessary for normal cell division and for the maintenance of normal septation. The sequence is that of Probable GTP-binding protein EngB from Rickettsia prowazekii (strain Madrid E).